We begin with the raw amino-acid sequence, 271 residues long: Phosphatidylinositol transfer protein alpha isoform (271 aa).

A 1,2-diacyl-sn-glycero-3-phospho-(1D-myo-inositol) is bound by residues T59, K61, E86, N90, T97, and K195. K216 carries the N6-acetyllysine modification. A compositionally biased stretch (basic and acidic residues) spans 251 to 264 (TKRQLDEMRQKDPV). A disordered region spans residues 251–271 (TKRQLDEMRQKDPVKGMTADD).

Belongs to the PtdIns transfer protein family. PI transfer class I subfamily. Phosphorylated by PKC in a calcium and phosphatidylserine-dependent manner.

Its subcellular location is the cytoplasm. It is found in the nucleus. The catalysed reaction is a 1,2-diacyl-sn-glycero-3-phosphocholine(in) = a 1,2-diacyl-sn-glycero-3-phosphocholine(out). It catalyses the reaction a 1,2-diacyl-sn-glycero-3-phospho-(1D-myo-inositol)(in) = a 1,2-diacyl-sn-glycero-3-phospho-(1D-myo-inositol)(out). Its function is as follows. Catalyzes the transfer of phosphatidylinositol (PI) and phosphatidylcholine (PC) between membranes. Shows a preference for PI and PC containing shorter saturated or monosaturated acyl chains at the sn-1 and sn-2 positions. Preference order for PC is C16:1 &gt; C16:0 &gt; C18:1 &gt; C18:0 &gt; C20:4 and for PI is C16:1 &gt; C16:0 &gt; C18:1 &gt; C18:0 &gt; C20:4 &gt; C20:3. In Mus musculus (Mouse), this protein is Phosphatidylinositol transfer protein alpha isoform (Pitpna).